The primary structure comprises 552 residues: Probable protein kinase UbiB (552 aa).

Positions His121–Ala504 constitute a Protein kinase domain. ATP-binding positions include Leu127–Val135 and Lys149. Asp284 serves as the catalytic Proton acceptor. 2 consecutive transmembrane segments (helical) span residues Val501–His521 and Tyr526–Phe546.

This sequence belongs to the ABC1 family. UbiB subfamily.

The protein resides in the cell inner membrane. The protein operates within cofactor biosynthesis; ubiquinone biosynthesis [regulation]. Its function is as follows. Is probably a protein kinase regulator of UbiI activity which is involved in aerobic coenzyme Q (ubiquinone) biosynthesis. The chain is Probable protein kinase UbiB from Xylella fastidiosa (strain 9a5c).